Consider the following 356-residue polypeptide: GDP-mannose:di-myo-inositol-1,3'-phosphate beta-1,2-mannosyltransferase (356 aa).

It belongs to the MDIP synthase family. Mg(2+) is required as a cofactor.

The catalysed reaction is bis(myo-inositol) 1,3'-phosphate + GDP-alpha-D-mannose = 2-O-(beta-D-mannosyl)-bis(myo-inositol) 1,3'-phosphate + GDP + H(+). The enzyme catalyses 2-O-(beta-D-mannosyl)-bis(myo-inositol) 1,3'-phosphate + GDP-alpha-D-mannose = 2-O-(beta-D-mannosyl-(1-&gt;2)-beta-D-mannosyl)-bis(myo-inositol) 1,3'-phosphate + GDP + H(+). It catalyses the reaction bis(myo-inositol) 1,3'-phosphate + 2 GDP-alpha-D-mannose = 2-O-(beta-D-mannosyl-(1-&gt;2)-beta-D-mannosyl)-bis(myo-inositol) 1,3'-phosphate + 2 GDP + 2 H(+). In terms of biological role, catalyzes the transfer of the mannosyl group from GDP-mannose to di-myo-inositol-1,3'-phosphate (DIP), producing mannosyl-di-myo-inositol phosphate (MDIP). Can also use MDIP as an acceptor of a second mannose residue, yielding di-mannosyl-di-myo-inositol phosphate (MMDIP). Minor amounts of the tri-mannosylated form are also formed. The polypeptide is GDP-mannose:di-myo-inositol-1,3'-phosphate beta-1,2-mannosyltransferase (Thermotoga maritima (strain ATCC 43589 / DSM 3109 / JCM 10099 / NBRC 100826 / MSB8)).